Consider the following 187-residue polypeptide: Adenylate kinase (187 aa).

An ATP-binding site is contributed by 10-15; the sequence is GSGKGT. The tract at residues 30 to 59 is NMP; the sequence is STGDMLRAEIAAGTELGKQAKTVMDAGNLV. AMP is bound by residues T31, R36, 57-59, 85-88, and Q92; these read NLV and GYPR. The segment at 126-136 is LID; that stretch reads GRAKEQGRADD. R127 lines the ATP pocket. 2 residues coordinate AMP: R133 and R144. Residue G172 participates in ATP binding.

Belongs to the adenylate kinase family. Monomer.

The protein resides in the cytoplasm. The enzyme catalyses AMP + ATP = 2 ADP. The protein operates within purine metabolism; AMP biosynthesis via salvage pathway; AMP from ADP: step 1/1. In terms of biological role, catalyzes the reversible transfer of the terminal phosphate group between ATP and AMP. Plays an important role in cellular energy homeostasis and in adenine nucleotide metabolism. In Stenotrophomonas maltophilia (strain K279a), this protein is Adenylate kinase.